We begin with the raw amino-acid sequence, 279 residues long: Large ribosomal subunit protein uL2 (279 aa).

A disordered region spans residues 223–279 (PVAMNPVDHPMGGGEGRASGGHPRSRKGLPAKGFKTRSRTKASNKYIVERRKTRKKK). Basic residues predominate over residues 245-264 (PRSRKGLPAKGFKTRSRTKA).

This sequence belongs to the universal ribosomal protein uL2 family. Part of the 50S ribosomal subunit. Forms a bridge to the 30S subunit in the 70S ribosome.

Its function is as follows. One of the primary rRNA binding proteins. Required for association of the 30S and 50S subunits to form the 70S ribosome, for tRNA binding and peptide bond formation. It has been suggested to have peptidyltransferase activity; this is somewhat controversial. Makes several contacts with the 16S rRNA in the 70S ribosome. The polypeptide is Large ribosomal subunit protein uL2 (Christiangramia forsetii (strain DSM 17595 / CGMCC 1.15422 / KT0803) (Gramella forsetii)).